The following is a 222-amino-acid chain: Phosphoglycolate phosphatase (222 aa).

The active-site Nucleophile is D8. Mg(2+) is bound by residues D8 and D10. K150 contributes to the substrate binding site. Mg(2+) is bound by residues D173 and D177.

The protein belongs to the archaeal SPP-like hydrolase family. Requires Mg(2+) as cofactor.

It carries out the reaction 2-phosphoglycolate + H2O = glycolate + phosphate. In terms of biological role, catalyzes the dephosphorylation of 2-phosphoglycolate. This Metallosphaera sedula (strain ATCC 51363 / DSM 5348 / JCM 9185 / NBRC 15509 / TH2) protein is Phosphoglycolate phosphatase.